The following is a 78-amino-acid chain: Acyl carrier protein (78 aa).

The region spanning 1-75 (MIKEKILSIV…DLISVVKNST (75 aa)) is the Carrier domain. Ser-35 is modified (O-(pantetheine 4'-phosphoryl)serine).

Belongs to the acyl carrier protein (ACP) family. Post-translationally, 4'-phosphopantetheine is transferred from CoA to a specific serine of apo-ACP by AcpS. This modification is essential for activity because fatty acids are bound in thioester linkage to the sulfhydryl of the prosthetic group.

The protein localises to the cytoplasm. It participates in lipid metabolism; fatty acid biosynthesis. In terms of biological role, carrier of the growing fatty acid chain in fatty acid biosynthesis. The protein is Acyl carrier protein (acpP) of Shigella flexneri.